Consider the following 141-residue polypeptide: Hemoglobin subunit alpha-D (141 aa).

The Globin domain occupies 1-141 (VLTAEDRRLL…VADVLSEKYR (141 aa)). Residues His57 and His87 each coordinate heme b.

It belongs to the globin family. The deoxy-Hb is a heterotetramer of two alpha and two beta chains, but oxygenation results in dissociation to dimers. Red blood cells.

Involved in oxygen transport from the lung to the various peripheral tissues. This chain is Hemoglobin subunit alpha-D (HBAD), found in Erythrolamprus miliaris (South American water snake).